A 241-amino-acid polypeptide reads, in one-letter code: Small ribosomal subunit protein uS10m (241 aa).

Residues 1 to 54 (MIAGVLRRSSLPSRQTLSAALASFNSCISHNLTPATTGASVSSRFTLASSPNSF) constitute a mitochondrion transit peptide.

It belongs to the universal ribosomal protein uS10 family. As to quaternary structure, component of the mitochondrial ribosome small subunit.

It is found in the mitochondrion. In Arabidopsis thaliana (Mouse-ear cress), this protein is Small ribosomal subunit protein uS10m (RPS10).